We begin with the raw amino-acid sequence, 657 residues long: Iron-sulfur cluster biogenesis chaperone, mitochondrial (657 aa).

It belongs to the heat shock protein 70 family. As to quaternary structure, interacts with the Fe/S cluster assembly proteins ISU1, MGE1, GRX5 and JAC1.

Its subcellular location is the mitochondrion matrix. The enzyme catalyses ATP + H2O = ADP + phosphate + H(+). Required for the assembly of iron-sulfur (Fe/S) clusters in mitochondria. Assisted by the DnaJ-like co-chaperone JAC1 and the nucleotide exchange factor MGE1, it mediates ATP-dependent Fe-S cluster transfer from the scaffold proteins ISU1/ISU2 to GRX5. The chain is Iron-sulfur cluster biogenesis chaperone, mitochondrial from Saccharomyces cerevisiae (strain ATCC 204508 / S288c) (Baker's yeast).